A 443-amino-acid chain; its full sequence is Xaa-Pro dipeptidase (443 aa).

The Mn(2+) site is built by Asp244, Asp255, His339, Glu384, and Glu423.

The protein belongs to the peptidase M24B family. Bacterial-type prolidase subfamily. Mn(2+) is required as a cofactor.

It carries out the reaction Xaa-L-Pro dipeptide + H2O = an L-alpha-amino acid + L-proline. Its function is as follows. Splits dipeptides with a prolyl residue in the C-terminal position. The protein is Xaa-Pro dipeptidase of Pseudoalteromonas atlantica (strain T6c / ATCC BAA-1087).